Reading from the N-terminus, the 376-residue chain is Probable allantoicase (376 aa).

It belongs to the allantoicase family.

The enzyme catalyses allantoate + H2O = (S)-ureidoglycolate + urea. The protein operates within nitrogen metabolism; (S)-allantoin degradation; (S)-ureidoglycolate from allantoate (aminidohydrolase route): step 1/1. The sequence is that of Probable allantoicase from Streptomyces coelicolor (strain ATCC BAA-471 / A3(2) / M145).